The chain runs to 138 residues: Small ribosomal subunit protein uS11c (138 aa).

The interval 1-22 (MAKPIPKIGSRKNARSGSRKHL) is disordered. The segment covering 9 to 22 (GSRKNARSGSRKHL) has biased composition (basic residues).

The protein belongs to the universal ribosomal protein uS11 family. Part of the 30S ribosomal subunit.

It localises to the plastid. The protein resides in the chloroplast. This chain is Small ribosomal subunit protein uS11c, found in Lotus japonicus (Lotus corniculatus var. japonicus).